The primary structure comprises 303 residues: uncharacterized protein (303 aa).

The next 6 helical transmembrane spans lie at Gly-12–Leu-32, Ile-81–Phe-101, Ala-117–Ile-137, Cys-174–Ser-194, Ile-208–Val-228, and Phe-265–Ala-286. 3 Solcar repeats span residues Ser-17–Lys-105, Asp-111–Phe-195, and Ser-206–Ile-293.

This sequence belongs to the mitochondrial carrier (TC 2.A.29) family.

The protein resides in the mitochondrion inner membrane. This is an uncharacterized protein from Schizosaccharomyces pombe (strain 972 / ATCC 24843) (Fission yeast).